The sequence spans 245 residues: Adenosylcobinamide-GDP ribazoletransferase (245 aa).

5 consecutive transmembrane segments (helical) span residues 31 to 51 (FGRA…VLYG), 61 to 81 (PLLQ…ALHL), 113 to 133 (AAVV…AALL), 138 to 158 (PGLL…LFLT), and 192 to 212 (LAFG…FAWL).

This sequence belongs to the CobS family. Mg(2+) serves as cofactor.

Its subcellular location is the cell inner membrane. It carries out the reaction alpha-ribazole + adenosylcob(III)inamide-GDP = adenosylcob(III)alamin + GMP + H(+). The enzyme catalyses alpha-ribazole 5'-phosphate + adenosylcob(III)inamide-GDP = adenosylcob(III)alamin 5'-phosphate + GMP + H(+). The protein operates within cofactor biosynthesis; adenosylcobalamin biosynthesis; adenosylcobalamin from cob(II)yrinate a,c-diamide: step 7/7. In terms of biological role, joins adenosylcobinamide-GDP and alpha-ribazole to generate adenosylcobalamin (Ado-cobalamin). Also synthesizes adenosylcobalamin 5'-phosphate from adenosylcobinamide-GDP and alpha-ribazole 5'-phosphate. In Pseudomonas paraeruginosa (strain DSM 24068 / PA7) (Pseudomonas aeruginosa (strain PA7)), this protein is Adenosylcobinamide-GDP ribazoletransferase.